The following is a 158-amino-acid chain: Protein-export protein SecB (158 aa).

The protein belongs to the SecB family. In terms of assembly, homotetramer, a dimer of dimers. One homotetramer interacts with 1 SecA dimer.

The protein resides in the cytoplasm. In terms of biological role, one of the proteins required for the normal export of preproteins out of the cell cytoplasm. It is a molecular chaperone that binds to a subset of precursor proteins, maintaining them in a translocation-competent state. It also specifically binds to its receptor SecA. This chain is Protein-export protein SecB, found in Anaplasma phagocytophilum (strain HZ).